Here is a 640-residue protein sequence, read N- to C-terminus: PAN2-PAN3 deadenylation complex subunit PAN3 (640 aa).

The C3H1-type zinc finger occupies 17–46 (ENKDILCRNVLIYGHCRYEDQGCTYNHDQN). Composition is skewed to polar residues over residues 43–53 (HDQNKNSSQPE) and 63–87 (DSPS…SQAA). The segment at 43–101 (HDQNKNSSQPEAPSKKMFNVDSPSFTPSGQSTVLPKKTTLSSQAASAAPFTPRGGGTPT) is disordered. Positions 237–498 (QVIPNSGLPQ…TIEHFMTGIA (262 aa)) are pseudokinase domain. ATP-binding positions include Asn263, Arg288, 338–345 (DFHPLSKT), and 397–398 (SK). Residues 499–537 (SQMTTFFDLALQDNDEKLFHLAREVENGRIARSLMKLLT) adopt a coiled-coil conformation. The segment at 538–640 (ILERGDYDGV…SKTGAPGANT (103 aa)) is knob domain.

It belongs to the protein kinase superfamily. PAN3 family. In terms of assembly, homodimer. Forms a heterotrimer with a catalytic subunit PAN2 to form the poly(A)-nuclease (PAN) deadenylation complex. Interacts (via PAM-2 motif) with poly(A)-binding protein PAB1 (via PABC domain), conferring substrate specificity of the enzyme complex.

Its subcellular location is the cytoplasm. In terms of biological role, regulatory subunit of the poly(A)-nuclease (PAN) deadenylation complex, one of two cytoplasmic mRNA deadenylases involved in mRNA turnover. PAN specifically shortens poly(A) tails of RNA and the activity is stimulated by poly(A)-binding protein PAB1. PAN deadenylation is followed by rapid degradation of the shortened mRNA tails by the CCR4-NOT complex. Deadenylated mRNAs are then degraded by two alternative mechanisms, namely exosome-mediated 3'-5' exonucleolytic degradation, or deadenylation-dependent mRNA decaping and subsequent 5'-3' exonucleolytic degradation by XRN1. May also be involved in post-transcriptional maturation of mRNA poly(A) tails. PAN3 acts as a positive regulator for PAN activity, recruiting the catalytic subunit PAN2 to mRNA via its interaction with RNA and with PAB1. This chain is PAN2-PAN3 deadenylation complex subunit PAN3, found in Chaetomium thermophilum (strain DSM 1495 / CBS 144.50 / IMI 039719) (Thermochaetoides thermophila).